Here is a 954-residue protein sequence, read N- to C-terminus: Valine--tRNA ligase (954 aa).

The short motif at 48–58 (PNVTGSLHMGH) is the 'HIGH' region element. The 'KMSKS' region signature appears at 560-564 (KMSKS). Lysine 563 is an ATP binding site. The stretch at 883-953 (AGFINKEAEL…LKQQYLAIEA (71 aa)) forms a coiled coil.

It belongs to the class-I aminoacyl-tRNA synthetase family. ValS type 1 subfamily. Monomer.

The protein localises to the cytoplasm. The catalysed reaction is tRNA(Val) + L-valine + ATP = L-valyl-tRNA(Val) + AMP + diphosphate. Its function is as follows. Catalyzes the attachment of valine to tRNA(Val). As ValRS can inadvertently accommodate and process structurally similar amino acids such as threonine, to avoid such errors, it has a 'posttransfer' editing activity that hydrolyzes mischarged Thr-tRNA(Val) in a tRNA-dependent manner. This is Valine--tRNA ligase from Pasteurella multocida (strain Pm70).